Consider the following 297-residue polypeptide: Homoserine kinase (297 aa).

79 to 89 lines the ATP pocket; it reads PIARGLGSSGA.

It belongs to the GHMP kinase family. Homoserine kinase subfamily.

Its subcellular location is the cytoplasm. The catalysed reaction is L-homoserine + ATP = O-phospho-L-homoserine + ADP + H(+). Its pathway is amino-acid biosynthesis; L-threonine biosynthesis; L-threonine from L-aspartate: step 4/5. In terms of biological role, catalyzes the ATP-dependent phosphorylation of L-homoserine to L-homoserine phosphate. The polypeptide is Homoserine kinase (Pyrobaculum neutrophilum (strain DSM 2338 / JCM 9278 / NBRC 100436 / V24Sta) (Thermoproteus neutrophilus)).